Here is a 337-residue protein sequence, read N- to C-terminus: Probable deoxyhypusine synthase (337 aa).

Lys-308 functions as the Nucleophile in the catalytic mechanism.

It belongs to the deoxyhypusine synthase family. NAD(+) serves as cofactor.

It catalyses the reaction [eIF5A protein]-L-lysine + spermidine = [eIF5A protein]-deoxyhypusine + propane-1,3-diamine. It functions in the pathway protein modification; eIF5A hypusination. Functionally, catalyzes the NAD-dependent oxidative cleavage of spermidine and the subsequent transfer of the butylamine moiety of spermidine to the epsilon-amino group of a specific lysine residue of the eIF-5A precursor protein to form the intermediate deoxyhypusine residue. This chain is Probable deoxyhypusine synthase, found in Thermococcus kodakarensis (strain ATCC BAA-918 / JCM 12380 / KOD1) (Pyrococcus kodakaraensis (strain KOD1)).